The primary structure comprises 66 residues: Large ribosomal subunit protein bL35 (66 aa).

Residues 1–16 (MPKQKTHRASAKRFKR) show a composition bias toward basic residues. The segment at 1–20 (MPKQKTHRASAKRFKRTGSG) is disordered.

Belongs to the bacterial ribosomal protein bL35 family.

The polypeptide is Large ribosomal subunit protein bL35 (Streptococcus uberis (strain ATCC BAA-854 / 0140J)).